The sequence spans 350 residues: MSNITDPQMWDFDDLNFTGMPPADEDYSPCMLETETLNKYVVIIAYALVFLLSLLGNSLVMLVILYSRVGRSVTDVYLLNLALADLLFALTLPIWAASKVNGWIFGTFLCKVVSLLKEVNFYSGILLLACISVDRYLAIVHATRTLTQKRHLVKFVCLGCWGLSMNLSLPFFLFRQAYHPNNSSPVCYEVLGNDTAKWRMVLRILPHTFGFIVPLFVMLFCYGFTLRTLFKAHMGQKHRAMRVIFAVVLIFLLCWLPYNLVLLADTLMRTQVIQESCERRNNIGRALDATEILGFLHSCLNPIIYAFIGQNFRHGFLKILAMHGLVSKEFLARHRVTSYTSSSVNVSSNL.

Residues 1-39 (MSNITDPQMWDFDDLNFTGMPPADEDYSPCMLETETLNK) lie on the Extracellular side of the membrane. N3 and N16 each carry an N-linked (GlcNAc...) asparagine glycan. Residues 40 to 66 (YVVIIAYALVFLLSLLGNSLVMLVILY) traverse the membrane as a helical segment. The Cytoplasmic portion of the chain corresponds to 67-75 (SRVGRSVTD). A helical membrane pass occupies residues 76–96 (VYLLNLALADLLFALTLPIWA). Residues 97–111 (ASKVNGWIFGTFLCK) are Extracellular-facing. C110 and C187 are oxidised to a cystine. Residues 112-133 (VVSLLKEVNFYSGILLLACISV) traverse the membrane as a helical segment. The Cytoplasmic segment spans residues 134–154 (DRYLAIVHATRTLTQKRHLVK). A helical membrane pass occupies residues 155-174 (FVCLGCWGLSMNLSLPFFLF). The Extracellular portion of the chain corresponds to 175-199 (RQAYHPNNSSPVCYEVLGNDTAKWR). Residues 200 to 220 (MVLRILPHTFGFIVPLFVMLF) form a helical membrane-spanning segment. Over 221–242 (CYGFTLRTLFKAHMGQKHRAMR) the chain is Cytoplasmic. Residues 243–264 (VIFAVVLIFLLCWLPYNLVLLA) traverse the membrane as a helical segment. Over 265–285 (DTLMRTQVIQESCERRNNIGR) the chain is Extracellular. Residues 286 to 308 (ALDATEILGFLHSCLNPIIYAFI) form a helical membrane-spanning segment. Topologically, residues 309 to 350 (GQNFRHGFLKILAMHGLVSKEFLARHRVTSYTSSSVNVSSNL) are cytoplasmic.

The protein belongs to the G-protein coupled receptor 1 family. As to quaternary structure, interacts with IL8. Interacts with GNAI2.

The protein localises to the cell membrane. Receptor to interleukin-8, which is a powerful neutrophils chemotactic factor. Binding of IL-8 to the receptor causes activation of neutrophils. This response is mediated via a G-protein that activates a phosphatidylinositol-calcium second messenger system. The sequence is that of C-X-C chemokine receptor type 1 (CXCR1) from Homo sapiens (Human).